Consider the following 124-residue polypeptide: Quinol oxidase subunit 4 (124 aa).

3 helical membrane-spanning segments follow: residues 16–36 (IVGFILSIVLTLLALWVAVYT), 44–64 (LWIIFGFAFIQAALQLLMFMH), and 78–98 (TLFGFFGAIVIVLGSIWIFAA).

The protein belongs to the cytochrome c oxidase bacterial subunit 4 family.

It is found in the cell membrane. It carries out the reaction 2 a quinol + O2 = 2 a quinone + 2 H2O. Catalyzes quinol oxidation with the concomitant reduction of oxygen to water. Major component for energy conversion during vegetative growth. The chain is Quinol oxidase subunit 4 (qoxD) from Bacillus subtilis (strain 168).